Here is a 138-residue protein sequence, read N- to C-terminus: Cysteine desulfuration protein SufE (138 aa).

Residue Cys-51 is the Cysteine persulfide intermediate of the active site.

The protein belongs to the SufE family. Homodimer. Interacts with SufS.

It is found in the cytoplasm. It functions in the pathway cofactor biosynthesis; iron-sulfur cluster biosynthesis. Functionally, participates in cysteine desulfuration mediated by SufS. Cysteine desulfuration mobilizes sulfur from L-cysteine to yield L-alanine and constitutes an essential step in sulfur metabolism for biosynthesis of a variety of sulfur-containing biomolecules. Functions as a sulfur acceptor for SufS, by mediating the direct transfer of the sulfur atom from the S-sulfanylcysteine of SufS, an intermediate product of cysteine desulfuration process. In Escherichia coli O6:K15:H31 (strain 536 / UPEC), this protein is Cysteine desulfuration protein SufE.